The sequence spans 187 residues: UPF0232 protein Mb0004 (187 aa).

2 stretches are compositionally biased toward basic and acidic residues: residues 1–17 and 35–45; these read MTGS…ERLM and AARARGQDAGR. Disordered stretches follow at residues 1–23, 35–75, and 168–187; these read MTGS…PGLD, AARA…DPQP, and PSWR…DTYG.

This sequence belongs to the UPF0232 family.

The chain is UPF0232 protein Mb0004 from Mycobacterium bovis (strain ATCC BAA-935 / AF2122/97).